The primary structure comprises 608 residues: Elongation factor 4 (608 aa).

The tr-type G domain maps to 11 to 193 (KKIRNFSIIA…QIVEKVPEPS (183 aa)). Residues 23–28 (DHGKST) and 140–143 (NKID) contribute to the GTP site.

Belongs to the TRAFAC class translation factor GTPase superfamily. Classic translation factor GTPase family. LepA subfamily.

The protein localises to the cell membrane. The enzyme catalyses GTP + H2O = GDP + phosphate + H(+). Its function is as follows. Required for accurate and efficient protein synthesis under certain stress conditions. May act as a fidelity factor of the translation reaction, by catalyzing a one-codon backward translocation of tRNAs on improperly translocated ribosomes. Back-translocation proceeds from a post-translocation (POST) complex to a pre-translocation (PRE) complex, thus giving elongation factor G a second chance to translocate the tRNAs correctly. Binds to ribosomes in a GTP-dependent manner. In Listeria innocua serovar 6a (strain ATCC BAA-680 / CLIP 11262), this protein is Elongation factor 4.